The following is a 101-amino-acid chain: Small ribosomal subunit protein uS14 (101 aa).

The segment at 1–24 is disordered; that stretch reads MAKVSSIKKNEKRKKLSQSLHNKR. Residues 10-24 are compositionally biased toward basic residues; it reads NEKRKKLSQSLHNKR.

This sequence belongs to the universal ribosomal protein uS14 family. As to quaternary structure, part of the 30S ribosomal subunit. Contacts proteins S3 and S10.

Functionally, binds 16S rRNA, required for the assembly of 30S particles and may also be responsible for determining the conformation of the 16S rRNA at the A site. In Rickettsia bellii (strain OSU 85-389), this protein is Small ribosomal subunit protein uS14.